The primary structure comprises 581 residues: Probable peptidoglycan D,D-transpeptidase PenA (581 aa).

A helical transmembrane segment spans residues 28-48 (ISFVLMAMAVLFACLIARGLY). The active-site Acyl-ester intermediate is the serine 310.

The protein belongs to the transpeptidase family. FtsI subfamily.

It localises to the cell inner membrane. It carries out the reaction Preferential cleavage: (Ac)2-L-Lys-D-Ala-|-D-Ala. Also transpeptidation of peptidyl-alanyl moieties that are N-acyl substituents of D-alanine.. It participates in cell wall biogenesis; peptidoglycan biosynthesis. Its function is as follows. Catalyzes cross-linking of the peptidoglycan cell wall at the division septum. The chain is Probable peptidoglycan D,D-transpeptidase PenA from Neisseria gonorrhoeae.